The primary structure comprises 89 residues: DNA-directed RNA polymerase subunit omega (89 aa).

The protein belongs to the RNA polymerase subunit omega family. The RNAP catalytic core consists of 2 alpha, 1 beta, 1 beta' and 1 omega subunit. When a sigma factor is associated with the core the holoenzyme is formed, which can initiate transcription.

The enzyme catalyses RNA(n) + a ribonucleoside 5'-triphosphate = RNA(n+1) + diphosphate. Its function is as follows. Promotes RNA polymerase assembly. Latches the N- and C-terminal regions of the beta' subunit thereby facilitating its interaction with the beta and alpha subunits. This is DNA-directed RNA polymerase subunit omega from Idiomarina loihiensis (strain ATCC BAA-735 / DSM 15497 / L2-TR).